The primary structure comprises 172 residues: MEGAIQGSDAREQANSERWDGGCGGTITPFKLPDESPGLHEWRLHNSEESEDKDHPLGFKESWGFGKVVFKRYLRYDGTEASLHRALGSWERGSVNDAASRFLGLGQVGCTYSIRFRGSCLTLSGGSRTLQRLIEMAIRTKRTMLQLTPSEVEGNVSRGRPEGAKAFEKESE.

2 disordered regions span residues 1–38 (MEGA…ESPG) and 152–172 (VEGN…KESE). Basic and acidic residues-rich tracts occupy residues 9–20 (DAREQANSERWD) and 159–172 (GRPE…KESE).

It belongs to the tombusvirus protein p19 family. In terms of assembly, homodimer.

Its function is as follows. Viral suppressor of RNA silencing which binds specifically to silencing RNAs (siRNAs). Acts as a molecular caliper to specifically select siRNAs based on the length of the duplex region of the RNA. This is RNA silencing suppressor p19 from Havel river virus (HaRV).